A 91-amino-acid polypeptide reads, in one-letter code: Sec-independent protein translocase protein TatA (91 aa).

A helical transmembrane segment spans residues 3–23 (FFGIGLPEMLVILAIALLVFG). Residues 57 to 91 (DRTPATPAEATVEPPVLDSAPTEAVTVEKQTETQV) form a disordered region. The segment covering 59 to 72 (TPATPAEATVEPPV) has biased composition (low complexity).

This sequence belongs to the TatA/E family. Forms a complex with TatC.

Its subcellular location is the cell inner membrane. In terms of biological role, part of the twin-arginine translocation (Tat) system that transports large folded proteins containing a characteristic twin-arginine motif in their signal peptide across membranes. TatA could form the protein-conducting channel of the Tat system. This chain is Sec-independent protein translocase protein TatA, found in Synechococcus elongatus (strain ATCC 33912 / PCC 7942 / FACHB-805) (Anacystis nidulans R2).